We begin with the raw amino-acid sequence, 296 residues long: Probable AP endonuclease (296 aa).

A disulfide bridge links cysteine 16 with cysteine 20. Histidine 78, histidine 115, glutamate 142, histidine 182, histidine 218, aspartate 231, histidine 233, and glutamate 271 together coordinate Zn(2+).

This sequence belongs to the AP endonuclease 2 family. The cofactor is Zn(2+).

It is found in the host nucleus. Its subcellular location is the host cytoplasm. It localises to the virion. In terms of biological role, endonuclease of the viral base excision repair system that catalyzes DNA cleavage reaction at the apurinic or apyrimidinic sites (AP sites). Cleaves phosphodiester bonds on the 5' side of AP sites. In addition to endonuclease activity, the AP endonuclease has a proofreading 3'-5' exonuclease activity that is considerably more efficient in the elimination of a mismatch than in that of a correctly paired base. Displays 3'-phosphatase and 3'-repair diesterase activities. The single nucleotide gaps generated by the AP endonuclease are filled by the viral repair DNA polymerase X and the DNA ligase. The protein is Probable AP endonuclease of Ornithodoros (relapsing fever ticks).